Reading from the N-terminus, the 221-residue chain is Ribonuclease T (221 aa).

The Exonuclease domain maps to Val20–Phe196. The Mg(2+) site is built by Asp23, Glu25, His183, and Asp188. The active-site Proton donor/acceptor is His183.

This sequence belongs to the RNase T family. In terms of assembly, homodimer. Mg(2+) is required as a cofactor.

Trims short 3' overhangs of a variety of RNA species, leaving a one or two nucleotide 3' overhang. Responsible for the end-turnover of tRNA: specifically removes the terminal AMP residue from uncharged tRNA (tRNA-C-C-A). Also appears to be involved in tRNA biosynthesis. The chain is Ribonuclease T from Chromohalobacter salexigens (strain ATCC BAA-138 / DSM 3043 / CIP 106854 / NCIMB 13768 / 1H11).